A 479-amino-acid polypeptide reads, in one-letter code: Adenosylhomocysteinase (479 aa).

Substrate is bound by residues T66, D142, and E203. 204–206 (TTT) is an NAD(+) binding site. Substrate is bound by residues K233 and D237. Residues N238, 267-272 (GYGDVG), E290, N325, 346-348 (IGH), and N394 contribute to the NAD(+) site.

Belongs to the adenosylhomocysteinase family. NAD(+) serves as cofactor.

The protein localises to the cytoplasm. The catalysed reaction is S-adenosyl-L-homocysteine + H2O = L-homocysteine + adenosine. It participates in amino-acid biosynthesis; L-homocysteine biosynthesis; L-homocysteine from S-adenosyl-L-homocysteine: step 1/1. Its function is as follows. May play a key role in the regulation of the intracellular concentration of adenosylhomocysteine. This is Adenosylhomocysteinase from Nitratidesulfovibrio vulgaris (strain DSM 19637 / Miyazaki F) (Desulfovibrio vulgaris).